The following is a 206-amino-acid chain: Two-component response regulator ORR7 (206 aa).

The segment at 53–92 (VVPLHDNASAEDDDDDEEDDDEDDDDDDDEDDEEEAAPPY) is disordered. Acidic residues predominate over residues 61 to 88 (SAEDDDDDEEDDDEDDDDDDDEDDEEEA). In terms of domain architecture, Response regulatory spans 92-205 (YVMAVDDSSV…DISRITSRML (114 aa)). Asp-138 is subject to 4-aspartylphosphate.

The protein belongs to the ARR family. Type-A subfamily. Two-component system major event consists of a His-to-Asp phosphorelay between a sensor histidine kinase (HK) and a response regulator (RR). In plants, the His-to-Asp phosphorelay involves an additional intermediate named Histidine-containing phosphotransfer protein (HPt). This multistep phosphorelay consists of a His-Asp-His-Asp sequential transfer of a phosphate group between first a His and an Asp of the HK protein, followed by the transfer to a conserved His of the HPt protein and finally the transfer to an Asp in the receiver domain of the RR protein. Expressed in flowers, and at low levels in roots, mature leaves and shoots.

Functions as a response regulator involved in His-to-Asp phosphorelay signal transduction system. Phosphorylation of the Asp residue in the receiver domain activates the ability of the protein to promote the transcription of target genes. Type-A response regulators seem to act as negative regulators of the cytokinin signaling. The chain is Two-component response regulator ORR7 from Oryza sativa subsp. indica (Rice).